Here is a 363-residue protein sequence, read N- to C-terminus: Dioxygenase sphC (363 aa).

The Fe cation site is built by His183, Asp185, and His259.

This sequence belongs to the PhyH family. In terms of assembly, homodimer. Fe cation serves as cofactor.

The catalysed reaction is sphingofungin B1 + 2-oxoglutarate + O2 = sphingofungin B + succinate + CO2. It participates in secondary metabolite biosynthesis. Functionally, dioxygenase; part of the gene cluster that mediates the biosynthesis of sphingofungins, bioactive molecules acting as sphingolipid inhibitors via inhibiting serine palmitoyl transferase (SPT). Within the pathway, sphC catalyzes the hydrolxylation at C-4 to convert sphingofungin B1 into sphingofungin B as well as presphingofungin into sphingofungin B2. Sphingofungin biosynthesis starts with the PKS sphB that produces an C18 polyketide precursor 3-hydroxyoctadeca-4,10-dienoyl-ACP containing one delta-6 desaturation and one delta-12 desaturation. The aminoacyl transferase sphA uses the sphB product to produce 3-keto-presphingofungin by adding an aminomalonate molecule. SphF then reduces the C-3 ketone of 3-keto-presphingofungin which leads to presphingofungin. The cytochrome P450 monooxygenase sphH converts presphingofungin into sphingofungin B1 which is further converted to sphingofungin B by the dioxygenase sphC. SphC is also able to convert presphingofungin into sphingofungin B2. The acetyltransferase sphE acetylates sphingofungin B to produce sphingofungin C, but can also convert sphingofungin B1 into sphingofungin C1 and sphingofungin B2 into sphingofungin C2. Finally, sphingofungin C can be spontaneously converted into sphingofungin D. The sequence is that of Dioxygenase sphC from Aspergillus fumigatus (strain CBS 144.89 / FGSC A1163 / CEA10) (Neosartorya fumigata).